The primary structure comprises 384 residues: Dual specificity protein phosphatase 5 (384 aa).

In terms of domain architecture, Rhodanese spans 19 to 141 (AAARCVVLDC…FYSEYPECCV (123 aa)). The Nuclear localization signal signature appears at 53-74 (RRARGGAVSARYVLPDEAARAR). In terms of domain architecture, Tyrosine-protein phosphatase spans 178 to 319 (GPVEILPFLY…LLQYESEILP (142 aa)). The Phosphocysteine intermediate role is filled by cysteine 263.

The protein belongs to the protein-tyrosine phosphatase family. Non-receptor class dual specificity subfamily.

It localises to the nucleus. It carries out the reaction O-phospho-L-tyrosyl-[protein] + H2O = L-tyrosyl-[protein] + phosphate. It catalyses the reaction O-phospho-L-seryl-[protein] + H2O = L-seryl-[protein] + phosphate. The enzyme catalyses O-phospho-L-threonyl-[protein] + H2O = L-threonyl-[protein] + phosphate. Dual specificity protein phosphatase; active with phosphotyrosine, phosphoserine and phosphothreonine residues. The highest relative activity is toward ERK1. The sequence is that of Dual specificity protein phosphatase 5 (DUSP5) from Homo sapiens (Human).